Here is a 270-residue protein sequence, read N- to C-terminus: HTH-type transcriptional repressor DrrR1 (270 aa).

Low complexity predominate over residues 1–11 (MESGTSRTSDT). The interval 1 to 28 (MESGTSRTSDTGGTGRAGSTETSGSGDI) is disordered. The region spanning 49–109 (TLTLDRVVEA…LMLDRVQRPS (61 aa)) is the HTH tetR-type domain. The segment at residues 72-91 (SMRRVAAELGTGTMSLYRYV) is a DNA-binding region (H-T-H motif).

The protein localises to the cytoplasm. Its activity is regulated as follows. Daunorubicin and doxorubicin can induce dissociation of DrrR1 from its DNA complex. Ampicillin cannot release DrrR1 from the DNA complex at the same concentrations. Functionally, transcriptional regulator that modulates the expression of the drrA2-drrB2 genes, which encode an ABC transporter involved in daunorubicin efflux, in response to intracellular daunorubicin/doxorubicin accumulation. In the absence of daunorubicin or doxorubicin, binds directly to the drrA2-drrB2 promoter region and negatively regulates expression of the genes. In the presence of daunorubicin or doxorubicin, DrrR1 dissociates from DNA, leading to the transcription of the genes. The protein is HTH-type transcriptional repressor DrrR1 of Streptomyces coeruleorubidus.